The following is a 412-amino-acid chain: Autophagy-related protein 18 (412 aa).

WD repeat units follow at residues 100–139, 142–183, and 186–226; these read RFNK…NIMD, TNKL…SVST, and AHEG…RLFE. Residues 227–230 carry the L/FRRG motif motif; that stretch reads FRRG. A WD 4 repeat occupies 232 to 271; sequence TRCVNIYSLCFSSDSKYLTSSSNTETVHVFKLEKTEGVDN. Residues 363-412 are disordered; the sequence is HNIGPKSDTSRASPTSTGSGGAAKSAEASNQSVPNMDDPDDFPPMSHTSG. Residues 372-391 show a composition bias toward low complexity; the sequence is SRASPTSTGSGGAAKSAEAS.

It belongs to the WD repeat PROPPIN family. Expressed in neurons and intestinal cells.

It localises to the cytoplasmic vesicle. The protein localises to the phagosome membrane. Its subcellular location is the cytoplasm. Its function is as follows. Component of the autophagy machinery that is recruited to phosphatidylinositols on preautophagosomal structures, which are early autophagic structures, to promote autophagosome formation, and the subsequent degradation and clearance of engulfed apoptotic cells and P-granules in somatic cells. In particular, binds with high affinity to phosphatidylinositols including phosphatidylinositol 3-phosphate (PtdIns(3)P), phosphatidylinositol 4-phosphate (PtdIns(4)P), and phosphatidylinositol 5-phosphate (PtdIns(5)P), and more weakly to phosphatidylinositol 3,5-bisphosphate (PtdIns(3,5)P2). Plays a role in mitophagy, which is the autophagic consumption of mitochondria, in response to dietary restriction. Involved in xenophagy, the autophagy-mediated degradation of pathogens and pathogen products, such as toxins. Also plays a role in membrane-pore repair. In a daf-18/PTEN- and daf-16/FOXO-dependent manner, required for the proliferation of germ stem cell progenitors in the gonad during the late phases of larval development. By regulating the release of neurotransmitters and neuropeptides, involved in the control of lifespan in response to dietary restriction and daf-2 signaling. Probably through its involvement in autophagy, required for dauer formation. The chain is Autophagy-related protein 18 from Caenorhabditis elegans.